Here is a 433-residue protein sequence, read N- to C-terminus: Serine--tRNA ligase (433 aa).

236–238 (TAE) is an L-serine binding site. An ATP-binding site is contributed by 267–269 (RSE). Glutamate 290 contributes to the L-serine binding site. ATP is bound at residue 354-357 (EISS). Serine 394 is a binding site for L-serine.

The protein belongs to the class-II aminoacyl-tRNA synthetase family. Type-1 seryl-tRNA synthetase subfamily. Homodimer. The tRNA molecule binds across the dimer.

It is found in the cytoplasm. It catalyses the reaction tRNA(Ser) + L-serine + ATP = L-seryl-tRNA(Ser) + AMP + diphosphate + H(+). The catalysed reaction is tRNA(Sec) + L-serine + ATP = L-seryl-tRNA(Sec) + AMP + diphosphate + H(+). It participates in aminoacyl-tRNA biosynthesis; selenocysteinyl-tRNA(Sec) biosynthesis; L-seryl-tRNA(Sec) from L-serine and tRNA(Sec): step 1/1. Its function is as follows. Catalyzes the attachment of serine to tRNA(Ser). Is also able to aminoacylate tRNA(Sec) with serine, to form the misacylated tRNA L-seryl-tRNA(Sec), which will be further converted into selenocysteinyl-tRNA(Sec). This Acidiphilium cryptum (strain JF-5) protein is Serine--tRNA ligase.